Consider the following 657-residue polypeptide: UvrABC system protein B (657 aa).

A Helicase ATP-binding domain is found at 29 to 416 (KLAEFQTNEQ…LSHNNVVEQL (388 aa)). Residue 42 to 49 (GATGTGKT) coordinates ATP. Positions 95–118 (YFDFYQPEAYLPAKGVYIEKSATV) match the Beta-hairpin motif. Positions 435 to 597 (QVEDLVSEII…KTPMTVQKPI (163 aa)) constitute a Helicase C-terminal domain. The region spanning 615 to 650 (AALIKQLTKEMKQAAANQNYELAIEIRDSIFELEKQ) is the UVR domain.

Belongs to the UvrB family. As to quaternary structure, forms a heterotetramer with UvrA during the search for lesions. Interacts with UvrC in an incision complex.

The protein localises to the cytoplasm. The UvrABC repair system catalyzes the recognition and processing of DNA lesions. A damage recognition complex composed of 2 UvrA and 2 UvrB subunits scans DNA for abnormalities. Upon binding of the UvrA(2)B(2) complex to a putative damaged site, the DNA wraps around one UvrB monomer. DNA wrap is dependent on ATP binding by UvrB and probably causes local melting of the DNA helix, facilitating insertion of UvrB beta-hairpin between the DNA strands. Then UvrB probes one DNA strand for the presence of a lesion. If a lesion is found the UvrA subunits dissociate and the UvrB-DNA preincision complex is formed. This complex is subsequently bound by UvrC and the second UvrB is released. If no lesion is found, the DNA wraps around the other UvrB subunit that will check the other stand for damage. In Mycoplasma pneumoniae (strain ATCC 29342 / M129 / Subtype 1) (Mycoplasmoides pneumoniae), this protein is UvrABC system protein B.